Consider the following 21-residue polypeptide: Trypsin (21 aa).

Positions 1-7 are cleaved as a propeptide — activation peptide; it reads FPIEEDK. Residues 8 to 21 form the Peptidase S1 domain; it reads IVGGYECPKHXVPW.

This sequence belongs to the peptidase S1 family.

The protein localises to the secreted. The protein resides in the extracellular space. It carries out the reaction Preferential cleavage: Arg-|-Xaa, Lys-|-Xaa.. The protein is Trypsin of Protopterus aethiopicus (Marbled lungfish).